The sequence spans 555 residues: Formate--tetrahydrofolate ligase (555 aa).

64–71 contacts ATP; it reads TKAGIGKT.

The protein belongs to the formate--tetrahydrofolate ligase family.

The catalysed reaction is (6S)-5,6,7,8-tetrahydrofolate + formate + ATP = (6R)-10-formyltetrahydrofolate + ADP + phosphate. The protein operates within one-carbon metabolism; tetrahydrofolate interconversion. The chain is Formate--tetrahydrofolate ligase from Bacteroides thetaiotaomicron (strain ATCC 29148 / DSM 2079 / JCM 5827 / CCUG 10774 / NCTC 10582 / VPI-5482 / E50).